Consider the following 366-residue polypeptide: DNA replication and repair protein RecF (366 aa).

30-37 (GRNAQGKT) provides a ligand contact to ATP.

It belongs to the RecF family.

Its subcellular location is the cytoplasm. Its function is as follows. The RecF protein is involved in DNA metabolism; it is required for DNA replication and normal SOS inducibility. RecF binds preferentially to single-stranded, linear DNA. It also seems to bind ATP. The protein is DNA replication and repair protein RecF of Streptococcus thermophilus (strain ATCC BAA-250 / LMG 18311).